The primary structure comprises 264 residues: MAALIHEARLFFIALQFFTRVPVPAWVGYTPEWMHASARHYPLVGAWVGGVAALVLWLAAQVWPLSVAVGLSMAATVWLTGGFHEDGLADTCDGLGGSVSRERALTIMKDSRLGSYGALGLVGVLGLKAVALYELTDFDGVQALIALVWAHAVSRAVPVALLRLLPYAGDAEHAKAKPMAQQVSDAGLAAALGWAALACAAAWGLGASAFTLACAALGVIALAAFCVRWYRQRLGGYTGDTLGAAQQLCELAAYLGWLAGVWFE.

7 consecutive transmembrane segments (helical) span residues Leu-10–Thr-30, Leu-43–Trp-63, Leu-113–Tyr-133, Val-141–Leu-161, Val-183–Trp-203, Leu-205–Phe-225, and Gly-243–Phe-263.

This sequence belongs to the CobS family. Requires Mg(2+) as cofactor.

The protein localises to the cell inner membrane. The enzyme catalyses alpha-ribazole + adenosylcob(III)inamide-GDP = adenosylcob(III)alamin + GMP + H(+). The catalysed reaction is alpha-ribazole 5'-phosphate + adenosylcob(III)inamide-GDP = adenosylcob(III)alamin 5'-phosphate + GMP + H(+). Its pathway is cofactor biosynthesis; adenosylcobalamin biosynthesis; adenosylcobalamin from cob(II)yrinate a,c-diamide: step 7/7. Functionally, joins adenosylcobinamide-GDP and alpha-ribazole to generate adenosylcobalamin (Ado-cobalamin). Also synthesizes adenosylcobalamin 5'-phosphate from adenosylcobinamide-GDP and alpha-ribazole 5'-phosphate. This Leptothrix cholodnii (strain ATCC 51168 / LMG 8142 / SP-6) (Leptothrix discophora (strain SP-6)) protein is Adenosylcobinamide-GDP ribazoletransferase.